The sequence spans 193 residues: Ion-translocating oxidoreductase complex subunit A (193 aa).

6 helical membrane-spanning segments follow: residues 5–25 (ILLIISTALINNFVLVKFLGL), 39–59 (IGMGLATMFVLTVASLCAYLV), 72–92 (LRTLIFILVIAVVVQFTEMVI), 102–122 (LLGIFLPLITTNCAVLGVALL), 134–154 (VIYGFSASLGFSLVLVLFAAL), and 171–191 (SIALITAGLMSLAFMGFSGLV).

Belongs to the NqrDE/RnfAE family. In terms of assembly, the complex is composed of six subunits: RnfA, RnfB, RnfC, RnfD, RnfE and RnfG.

It is found in the cell inner membrane. In terms of biological role, part of a membrane-bound complex that couples electron transfer with translocation of ions across the membrane. In Histophilus somni (strain 2336) (Haemophilus somnus), this protein is Ion-translocating oxidoreductase complex subunit A.